Reading from the N-terminus, the 422-residue chain is Serine--tRNA ligase (422 aa).

Residue 229–231 (TAE) participates in L-serine binding. 258 to 260 (RRE) contributes to the ATP binding site. E281 provides a ligand contact to L-serine. 345–348 (EISS) contributes to the ATP binding site. L-serine is bound at residue S379.

This sequence belongs to the class-II aminoacyl-tRNA synthetase family. Type-1 seryl-tRNA synthetase subfamily. In terms of assembly, homodimer. The tRNA molecule binds across the dimer.

It localises to the cytoplasm. The enzyme catalyses tRNA(Ser) + L-serine + ATP = L-seryl-tRNA(Ser) + AMP + diphosphate + H(+). The catalysed reaction is tRNA(Sec) + L-serine + ATP = L-seryl-tRNA(Sec) + AMP + diphosphate + H(+). The protein operates within aminoacyl-tRNA biosynthesis; selenocysteinyl-tRNA(Sec) biosynthesis; L-seryl-tRNA(Sec) from L-serine and tRNA(Sec): step 1/1. Its function is as follows. Catalyzes the attachment of serine to tRNA(Ser). Is also able to aminoacylate tRNA(Sec) with serine, to form the misacylated tRNA L-seryl-tRNA(Sec), which will be further converted into selenocysteinyl-tRNA(Sec). In Methanosarcina mazei (strain ATCC BAA-159 / DSM 3647 / Goe1 / Go1 / JCM 11833 / OCM 88) (Methanosarcina frisia), this protein is Serine--tRNA ligase.